The chain runs to 213 residues: Bacteriochlorophyll synthase 23 kDa chain (213 aa).

It functions in the pathway porphyrin-containing compound metabolism; bacteriochlorophyll biosynthesis (light-independent). This is Bacteriochlorophyll synthase 23 kDa chain (bchJ) from Rhodobacter capsulatus (strain ATCC BAA-309 / NBRC 16581 / SB1003).